A 566-amino-acid chain; its full sequence is DDB1- and CUL4-associated factor 10 (566 aa).

Disordered regions lie at residues 1-72 (MFPF…AERA) and 87-123 (TASA…GAGL). S50, S57, S67, S96, S99, and S100 each carry phosphoserine. The span at 87 to 100 (TASASQAKLSPSSS) shows a compositional bias: low complexity. R141 carries the post-translational modification Omega-N-methylarginine. WD repeat units follow at residues 173–212 (RTHG…HIKT), 216–254 (AHED…TKVC), 258–297 (GHTS…EDGC), and 303–342 (FHTR…KSLE). The span at 354–374 (TTSSSDLTTTSSSSGSRVSGS) shows a compositional bias: low complexity. The segment at 354 to 413 (TTSSSDLTTTSSSSGSRVSGSPCHHNDSNSTEKHMSRASQREGVSPRNSLEVLTPEVPGE) is disordered. S356 is subject to Phosphoserine. The span at 377-388 (HHNDSNSTEKHM) shows a compositional bias: basic and acidic residues. WD repeat units lie at residues 415–455 (DRGN…QEGA), 477–515 (VGRG…SELV), and 533–566 (SHND…QPKF).

It belongs to the WD repeat DCAF10 family. As to quaternary structure, interacts with DDB1.

It functions in the pathway protein modification; protein ubiquitination. May function as a substrate receptor for CUL4-DDB1 E3 ubiquitin-protein ligase complex. In Mus musculus (Mouse), this protein is DDB1- and CUL4-associated factor 10 (Dcaf10).